We begin with the raw amino-acid sequence, 187 residues long: Pumilio homolog 26 (187 aa).

The stretch at 20–42 is one Pumilio 1; degenerate repeat; sequence VATEFLRVSNDVAELHKLSSKLT. One copy of the Pumilio 2; degenerate repeat lies at 43–78; sequence SDPYLFVEFVKTIRGFLSVQTALGLSGEIDTVFLQV. One copy of the Pumilio 3; degenerate repeat lies at 79–116; the sequence is IKGWFPDLITETFSFLIVVRIINLFNKRANSKVYPDIL. The Pumilio 4; degenerate repeat unit spans residues 117–154; the sequence is RRIGNNALYLTRNPLRGICLVEKAINVRDPDCTVFIAL. One copy of the Pumilio 5 repeat lies at 155-187; sequence KLHSHYVELSFEELGSNIVEKLLSVGESGICGV.

The protein localises to the cytoplasm. Its function is as follows. Sequence-specific RNA-binding protein that regulates translation and mRNA stability by binding the 3'-UTR of target mRNAs. The chain is Pumilio homolog 26 (APUM26) from Arabidopsis thaliana (Mouse-ear cress).